A 335-amino-acid chain; its full sequence is ATP-dependent 6-phosphofructokinase (335 aa).

Glycine 11 contributes to the ATP binding site. Residue 21-25 coordinates ADP; sequence RAVVR. Residues 72 to 73 and 102 to 105 contribute to the ATP site; these read RY and GDGS. Aspartate 103 is a binding site for Mg(2+). Residue 125-127 participates in substrate binding; it reads TID. Aspartate 127 acts as the Proton acceptor in catalysis. Residue arginine 154 participates in ADP binding. Residues arginine 162 and 169-171 each bind substrate; that span reads MGR. ADP contacts are provided by residues 185–187 and 213–215; these read GAD and KKH. Residues glutamate 222, arginine 244, and 250-253 contribute to the substrate site; that span reads HIQR.

Belongs to the phosphofructokinase type A (PFKA) family. ATP-dependent PFK group I subfamily. Prokaryotic clade 'B1' sub-subfamily. In terms of assembly, homotetramer. The cofactor is Mg(2+).

It localises to the cytoplasm. It catalyses the reaction beta-D-fructose 6-phosphate + ATP = beta-D-fructose 1,6-bisphosphate + ADP + H(+). It functions in the pathway carbohydrate degradation; glycolysis; D-glyceraldehyde 3-phosphate and glycerone phosphate from D-glucose: step 3/4. With respect to regulation, allosterically activated by ADP and other diphosphonucleosides, and allosterically inhibited by phosphoenolpyruvate. Its function is as follows. Catalyzes the phosphorylation of D-fructose 6-phosphate to fructose 1,6-bisphosphate by ATP, the first committing step of glycolysis. The polypeptide is ATP-dependent 6-phosphofructokinase (Streptococcus pneumoniae serotype 4 (strain ATCC BAA-334 / TIGR4)).